Reading from the N-terminus, the 363-residue chain is NAD(P)H-quinone oxidoreductase subunit 1, chloroplastic (363 aa).

A run of 7 helical transmembrane segments spans residues 28–48 (WVLAPISIYVLAITIGVLVIV), 98–118 (FSIGPSIAVIAILLSYSVIPF), 129–149 (IGIFLWIAISSIAPIGLLMSG), 253–273 (FGLFYVASYLNLLVSSLFVTV), 274–294 (LYLGGSNLSIPYIFVPGLVEI), 300–320 (IFGTTIGIFITLAKTYLFLFI), and 336–356 (LLNLGWKFLLPISLGNLLLTT).

This sequence belongs to the complex I subunit 1 family. NDH is composed of at least 16 different subunits, 5 of which are encoded in the nucleus.

It localises to the plastid. Its subcellular location is the chloroplast thylakoid membrane. The enzyme catalyses a plastoquinone + NADH + (n+1) H(+)(in) = a plastoquinol + NAD(+) + n H(+)(out). It catalyses the reaction a plastoquinone + NADPH + (n+1) H(+)(in) = a plastoquinol + NADP(+) + n H(+)(out). Its function is as follows. NDH shuttles electrons from NAD(P)H:plastoquinone, via FMN and iron-sulfur (Fe-S) centers, to quinones in the photosynthetic chain and possibly in a chloroplast respiratory chain. The immediate electron acceptor for the enzyme in this species is believed to be plastoquinone. Couples the redox reaction to proton translocation, and thus conserves the redox energy in a proton gradient. This chain is NAD(P)H-quinone oxidoreductase subunit 1, chloroplastic, found in Citrus sinensis (Sweet orange).